The primary structure comprises 103 residues: DNA-directed RNA polymerase subunit omega (103 aa).

Residues 52–103 (EIESGNVTIHPDPEGKREAVRRRIEEEKRRKEEEEKKIKEQIAKEKEDGEKI) form a disordered region. Positions 62–103 (PDPEGKREAVRRRIEEEKRRKEEEEKKIKEQIAKEKEDGEKI) are enriched in basic and acidic residues.

Belongs to the RNA polymerase subunit omega family. The RNAP catalytic core consists of 2 alpha, 1 beta, 1 beta' and 1 omega subunit. When a sigma factor is associated with the core the holoenzyme is formed, which can initiate transcription.

It carries out the reaction RNA(n) + a ribonucleoside 5'-triphosphate = RNA(n+1) + diphosphate. Promotes RNA polymerase assembly. Latches the N- and C-terminal regions of the beta' subunit thereby facilitating its interaction with the beta and alpha subunits. The chain is DNA-directed RNA polymerase subunit omega from Streptococcus pneumoniae serotype 19F (strain G54).